An 86-amino-acid polypeptide reads, in one-letter code: Cell division topological specificity factor (86 aa).

The protein belongs to the MinE family.

Prevents the cell division inhibition by proteins MinC and MinD at internal division sites while permitting inhibition at polar sites. This ensures cell division at the proper site by restricting the formation of a division septum at the midpoint of the long axis of the cell. This Allorhizobium ampelinum (strain ATCC BAA-846 / DSM 112012 / S4) (Agrobacterium vitis (strain S4)) protein is Cell division topological specificity factor.